Reading from the N-terminus, the 304-residue chain is Protein PagO (304 aa).

10 helical membrane-spanning segments follow: residues 4–24 (VSISILFMLVSLTWGTTWLAM), 34–54 (VFATGMRFMFAAPFLIIIAWL), 67–87 (LFQFVICIFYFCIPFSLMIYG), 95–115 (LAAIIFANMPVAVLIASVLFL), 119–139 (AKLMQIAGLTIAITALTGILL), 150–170 (WQGITALISAVLIHAIIYTQC), 180–200 (ITFNALPCLLAGLILSATGWF), 214–234 (ILATLYLGAFAGVFGILCYFA), 246–266 (LVFLIFPLIAVSLEDYIYGYA), and 267–287 (ISTHSMLLIIPLVIGIFLTLV). 2 consecutive EamA domains span residues 15–139 (LTWG…GILL) and 161–287 (LIHA…LTLV).

This sequence belongs to the EamA transporter family.

It localises to the cell membrane. This chain is Protein PagO (pagO), found in Salmonella typhimurium (strain LT2 / SGSC1412 / ATCC 700720).